The chain runs to 196 residues: dTTP/UTP pyrophosphatase (196 aa).

The Proton acceptor role is filled by aspartate 76.

It belongs to the Maf family. YhdE subfamily. Requires a divalent metal cation as cofactor.

It is found in the cytoplasm. It carries out the reaction dTTP + H2O = dTMP + diphosphate + H(+). The catalysed reaction is UTP + H2O = UMP + diphosphate + H(+). Functionally, nucleoside triphosphate pyrophosphatase that hydrolyzes dTTP and UTP. May have a dual role in cell division arrest and in preventing the incorporation of modified nucleotides into cellular nucleic acids. This Chlorobium chlorochromatii (strain CaD3) protein is dTTP/UTP pyrophosphatase.